Here is a 142-residue protein sequence, read N- to C-terminus: ATP synthase epsilon chain (142 aa).

This sequence belongs to the ATPase epsilon chain family. In terms of assembly, F-type ATPases have 2 components, CF(1) - the catalytic core - and CF(0) - the membrane proton channel. CF(1) has five subunits: alpha(3), beta(3), gamma(1), delta(1), epsilon(1). CF(0) has three main subunits: a, b and c.

The protein resides in the cell inner membrane. Functionally, produces ATP from ADP in the presence of a proton gradient across the membrane. The sequence is that of ATP synthase epsilon chain from Shewanella sediminis (strain HAW-EB3).